A 130-amino-acid chain; its full sequence is Small ribosomal subunit protein uS11 (130 aa).

This sequence belongs to the universal ribosomal protein uS11 family. As to quaternary structure, part of the 30S ribosomal subunit. Interacts with proteins S7 and S18. Binds to IF-3.

Located on the platform of the 30S subunit, it bridges several disparate RNA helices of the 16S rRNA. Forms part of the Shine-Dalgarno cleft in the 70S ribosome. This chain is Small ribosomal subunit protein uS11, found in Shewanella amazonensis (strain ATCC BAA-1098 / SB2B).